The following is a 193-amino-acid chain: Potassium-transporting ATPase KdpC subunit (193 aa).

A helical transmembrane segment spans residues 7–27 (PMIVIFAVLAALTGLAYPAVM).

This sequence belongs to the KdpC family. The system is composed of three essential subunits: KdpA, KdpB and KdpC.

The protein localises to the cell inner membrane. Functionally, part of the high-affinity ATP-driven potassium transport (or Kdp) system, which catalyzes the hydrolysis of ATP coupled with the electrogenic transport of potassium into the cytoplasm. This subunit acts as a catalytic chaperone that increases the ATP-binding affinity of the ATP-hydrolyzing subunit KdpB by the formation of a transient KdpB/KdpC/ATP ternary complex. The protein is Potassium-transporting ATPase KdpC subunit of Paraburkholderia phymatum (strain DSM 17167 / CIP 108236 / LMG 21445 / STM815) (Burkholderia phymatum).